A 310-amino-acid polypeptide reads, in one-letter code: MAHMRSVLRGRLCGMREILRCQKASYTEASRKETHFGFQAVSEEEKRERVYKVFENVAHNYDIMNDAMSLGVHRFWKDWLLQLMKPTPGMQLLDMAGGTGDISFRFINYIRAQREKWIRQELKFQQDLSWPDISKTYQNKEEGSLMGSRAVICDINKEMLKVGLQKSLRLGYSEGLSWVAGDAEELPFGDDKFDVYTIAFGIRNVTHIEQALQEAYRVLKPGGRFLCLEFSHVNNPLLSKIYDVYSFQVIPVLGEVIAKDWKSYQYLVESIRRFPSQEEFKAMIEDAGFSKVNYHNLTSGVVAVHSGFKL.

Residues Met-1 to Ser-6 constitute a mitochondrion transit peptide. S-adenosyl-L-methionine-binding positions include Thr-99, Asp-154, and Asp-182–Ala-183.

It belongs to the class I-like SAM-binding methyltransferase superfamily. MenG/UbiE family. In terms of assembly, component of a multi-subunit COQ enzyme complex, composed of at least coq3, coq4, coq5, coq6, coq7 and coq9.

It localises to the mitochondrion inner membrane. It catalyses the reaction a 2-methoxy-6-(all-trans-polyprenyl)benzene-1,4-diol + S-adenosyl-L-methionine = a 5-methoxy-2-methyl-3-(all-trans-polyprenyl)benzene-1,4-diol + S-adenosyl-L-homocysteine + H(+). It participates in cofactor biosynthesis; ubiquinone biosynthesis. Methyltransferase required for the conversion of 2-polyprenyl-6-methoxy-1,4-benzoquinol (DDMQH2) to 2-polyprenyl-3-methyl-6-methoxy-1,4-benzoquinol (DMQH2). The sequence is that of 2-methoxy-6-polyprenyl-1,4-benzoquinol methylase, mitochondrial from Xenopus laevis (African clawed frog).